Reading from the N-terminus, the 510-residue chain is Putative cytochrome P450 cyp-13B1 (510 aa).

Cysteine 456 serves as a coordination point for heme.

Belongs to the cytochrome P450 family. Heme is required as a cofactor.

In terms of biological role, cytochromes P450 are a group of heme-thiolate monooxygenases. They oxidize a variety of structurally unrelated compounds, including steroids, fatty acids, and xenobiotics. May play a role in the regulation of lifespan. The polypeptide is Putative cytochrome P450 cyp-13B1 (Caenorhabditis elegans).